The following is a 279-amino-acid chain: Ribosomal RNA small subunit methyltransferase A (279 aa).

S-adenosyl-L-methionine contacts are provided by His-10, Leu-12, Gly-37, Glu-58, Asp-83, and Asn-108.

It belongs to the class I-like SAM-binding methyltransferase superfamily. rRNA adenine N(6)-methyltransferase family. RsmA subfamily.

The protein resides in the cytoplasm. It catalyses the reaction adenosine(1518)/adenosine(1519) in 16S rRNA + 4 S-adenosyl-L-methionine = N(6)-dimethyladenosine(1518)/N(6)-dimethyladenosine(1519) in 16S rRNA + 4 S-adenosyl-L-homocysteine + 4 H(+). In terms of biological role, specifically dimethylates two adjacent adenosines (A1518 and A1519) in the loop of a conserved hairpin near the 3'-end of 16S rRNA in the 30S particle. May play a critical role in biogenesis of 30S subunits. This chain is Ribosomal RNA small subunit methyltransferase A, found in Synechococcus elongatus (strain ATCC 33912 / PCC 7942 / FACHB-805) (Anacystis nidulans R2).